The chain runs to 256 residues: Thiazole synthase (256 aa).

Lys-95 serves as the catalytic Schiff-base intermediate with DXP. Residues Gly-156, 182-183 (AG), and 204-205 (NT) each bind 1-deoxy-D-xylulose 5-phosphate.

Belongs to the ThiG family. Homotetramer. Forms heterodimers with either ThiH or ThiS.

The protein localises to the cytoplasm. The catalysed reaction is [ThiS sulfur-carrier protein]-C-terminal-Gly-aminoethanethioate + 2-iminoacetate + 1-deoxy-D-xylulose 5-phosphate = [ThiS sulfur-carrier protein]-C-terminal Gly-Gly + 2-[(2R,5Z)-2-carboxy-4-methylthiazol-5(2H)-ylidene]ethyl phosphate + 2 H2O + H(+). The protein operates within cofactor biosynthesis; thiamine diphosphate biosynthesis. In terms of biological role, catalyzes the rearrangement of 1-deoxy-D-xylulose 5-phosphate (DXP) to produce the thiazole phosphate moiety of thiamine. Sulfur is provided by the thiocarboxylate moiety of the carrier protein ThiS. In vitro, sulfur can be provided by H(2)S. The sequence is that of Thiazole synthase from Escherichia coli O17:K52:H18 (strain UMN026 / ExPEC).